The primary structure comprises 348 residues: Anthranilate phosphoribosyltransferase (348 aa).

Residues Gly-89, 92–93, Thr-97, 99–102, 117–125, and Ser-129 each bind 5-phospho-alpha-D-ribose 1-diphosphate; these read GD, NIST, and KHGNRSVSS. Gly-89 contacts anthranilate. Ser-101 lines the Mg(2+) pocket. Asn-120 contacts anthranilate. Anthranilate is bound at residue Arg-175. The Mg(2+) site is built by Asp-233 and Glu-234.

Belongs to the anthranilate phosphoribosyltransferase family. Homodimer. Mg(2+) serves as cofactor.

It carries out the reaction N-(5-phospho-beta-D-ribosyl)anthranilate + diphosphate = 5-phospho-alpha-D-ribose 1-diphosphate + anthranilate. It functions in the pathway amino-acid biosynthesis; L-tryptophan biosynthesis; L-tryptophan from chorismate: step 2/5. Catalyzes the transfer of the phosphoribosyl group of 5-phosphorylribose-1-pyrophosphate (PRPP) to anthranilate to yield N-(5'-phosphoribosyl)-anthranilate (PRA). The polypeptide is Anthranilate phosphoribosyltransferase (Shewanella putrefaciens (strain CN-32 / ATCC BAA-453)).